A 260-amino-acid polypeptide reads, in one-letter code: tRNA pseudouridine synthase C (260 aa).

Residue Asp54 is part of the active site.

The protein belongs to the pseudouridine synthase RluA family.

The enzyme catalyses uridine(65) in tRNA = pseudouridine(65) in tRNA. In terms of biological role, responsible for synthesis of pseudouridine from uracil-65 in transfer RNAs. The polypeptide is tRNA pseudouridine synthase C (truC) (Salmonella typhi).